We begin with the raw amino-acid sequence, 247 residues long: 3-oxoacyl-[acyl-carrier-protein] reductase (247 aa).

11-35 (VTGASRGIGKATALALAATGMKVVV) lines the NADP(+) pocket. Substrate is bound at residue serine 143. Residue tyrosine 156 is the Proton acceptor of the active site.

It belongs to the short-chain dehydrogenases/reductases (SDR) family.

It catalyses the reaction a (3R)-hydroxyacyl-[ACP] + NADP(+) = a 3-oxoacyl-[ACP] + NADPH + H(+). Its pathway is lipid metabolism; fatty acid biosynthesis. In terms of biological role, catalyzes the NADPH-dependent reduction of beta-ketoacyl-ACP substrates to beta-hydroxyacyl-ACP products, the first reductive step in the elongation cycle of fatty acid biosynthesis. Is capable of reducing acetoacetyl-CoA, but less well than its paralog PhaB. This chain is 3-oxoacyl-[acyl-carrier-protein] reductase (fabG), found in Synechocystis sp. (strain ATCC 27184 / PCC 6803 / Kazusa).